A 335-amino-acid polypeptide reads, in one-letter code: tRNA (adenine(58)-N(1))-methyltransferase catalytic subunit TRM61 (335 aa).

S-adenosyl-L-methionine-binding positions include S114 to S116, E135, R140, D162 to V163, and D183. Basic and acidic residues predominate over residues V271–P281. Positions V271 to E302 are disordered.

This sequence belongs to the class I-like SAM-binding methyltransferase superfamily. TRM61 family. Heterotetramer; composed of two copies of TRM6 and two copies of TRM61.

The protein localises to the nucleus. The enzyme catalyses adenosine(58) in tRNA + S-adenosyl-L-methionine = N(1)-methyladenosine(58) in tRNA + S-adenosyl-L-homocysteine + H(+). In terms of biological role, catalytic subunit of tRNA (adenine-N(1)-)-methyltransferase, which catalyzes the formation of N(1)-methyladenine at position 58 (m1A58) in initiator methionyl-tRNA. The protein is tRNA (adenine(58)-N(1))-methyltransferase catalytic subunit TRM61 (TRM61) of Candida albicans (strain SC5314 / ATCC MYA-2876) (Yeast).